The following is a 368-amino-acid chain: Putative transport protein bbp_117 (368 aa).

Helical transmembrane passes span 13–35, 39–61, 68–90, 159–181, 216–238, 248–270, 277–299, and 314–336; these read VIFS…RPFF, AWAS…LLWG, VMMT…NSLI, HFGR…YWNG, LGVV…ISGI, IIIF…IWLY, WGTV…RPIL, and GVIG…VLII.

It belongs to the autoinducer-2 exporter (AI-2E) (TC 2.A.86) family.

Its subcellular location is the cell membrane. In Buchnera aphidicola subsp. Baizongia pistaciae (strain Bp), this protein is Putative transport protein bbp_117.